Consider the following 105-residue polypeptide: Large ribosomal subunit protein eL42 (105 aa).

The disordered stretch occupies residues 23 to 52 (KVTQYKKGKESRLAQGRRRYDSKQKGFGGQ). Basic and acidic residues predominate over residues 29–46 (KGKESRLAQGRRRYDSKQ).

This sequence belongs to the eukaryotic ribosomal protein eL42 family.

The sequence is that of Large ribosomal subunit protein eL42 (rpl-44) from Brugia malayi (Filarial nematode worm).